Here is a 126-residue protein sequence, read N- to C-terminus: Fluoride-specific ion channel FluC 3 (126 aa).

Transmembrane regions (helical) follow at residues 7–27, 37–57, 68–87, and 101–121; these read MWVG…GLSI, LGTF…SILF, LMNT…FSSM, and AIAA…AAFG. Residues glycine 79 and threonine 82 each coordinate Na(+).

The protein belongs to the fluoride channel Fluc/FEX (TC 1.A.43) family.

It localises to the cell inner membrane. It catalyses the reaction fluoride(in) = fluoride(out). Its activity is regulated as follows. Na(+) is not transported, but it plays an essential structural role and its presence is essential for fluoride channel function. In terms of biological role, fluoride-specific ion channel. Important for reducing fluoride concentration in the cell, thus reducing its toxicity. This Yersinia pestis protein is Fluoride-specific ion channel FluC 3.